The primary structure comprises 226 residues: ATP synthase subunit a (226 aa).

Helical transmembrane passes span 17-37 (FSYF…AMMA), 79-99 (LVAT…IPGF), 105-125 (SLNL…FEGI), 134-154 (FAHF…IEIV), 176-196 (LFLM…AYVL), and 199-219 (FMAF…LAGA).

Belongs to the ATPase A chain family. As to quaternary structure, F-type ATPases have 2 components, CF(1) - the catalytic core - and CF(0) - the membrane proton channel. CF(1) has five subunits: alpha(3), beta(3), gamma(1), delta(1), epsilon(1). CF(0) has three main subunits: a(1), b(2) and c(9-12). The alpha and beta chains form an alternating ring which encloses part of the gamma chain. CF(1) is attached to CF(0) by a central stalk formed by the gamma and epsilon chains, while a peripheral stalk is formed by the delta and b chains.

Its subcellular location is the cell inner membrane. Key component of the proton channel; it plays a direct role in the translocation of protons across the membrane. The protein is ATP synthase subunit a of Campylobacter jejuni subsp. jejuni serotype O:6 (strain 81116 / NCTC 11828).